A 1386-amino-acid chain; its full sequence is DNA-directed RNA polymerase subunit beta'' (1386 aa).

4 residues coordinate Zn(2+): Cys220, Cys289, Cys296, and Cys299.

It belongs to the RNA polymerase beta' chain family. RpoC2 subfamily. In plastids the minimal PEP RNA polymerase catalytic core is composed of four subunits: alpha, beta, beta', and beta''. When a (nuclear-encoded) sigma factor is associated with the core the holoenzyme is formed, which can initiate transcription. The cofactor is Zn(2+).

It localises to the plastid. It is found in the chloroplast. It catalyses the reaction RNA(n) + a ribonucleoside 5'-triphosphate = RNA(n+1) + diphosphate. DNA-dependent RNA polymerase catalyzes the transcription of DNA into RNA using the four ribonucleoside triphosphates as substrates. The chain is DNA-directed RNA polymerase subunit beta'' from Marchantia polymorpha (Common liverwort).